The following is a 1431-amino-acid chain: Probable serine/threonine-protein kinase irlA (1431 aa).

A compositionally biased stretch (basic residues) spans 1–10 (MTKPIFKSKT). 2 disordered regions span residues 1–81 (MTKP…EKEE) and 736–879 (KREK…NNNK). Residues 25 to 43 (NEDEEEEEGGEEGGEEEEI) show a composition bias toward acidic residues. The span at 46 to 67 (NKNSNNSSSNSNNNNNDNNNNN) shows a compositional bias: low complexity. 2 coiled-coil regions span residues 57–97 (NNNN…LDME) and 715–759 (KKRS…NNNN). Residues 68–81 (GEERKVEKEEEKEE) are compositionally biased toward basic and acidic residues. The span at 738 to 749 (EKKKQKDKKKNK) shows a compositional bias: basic residues. The segment covering 750–776 (SNQNQKNNNNQNNQSNNNKINSPSSNK) has biased composition (low complexity). Over residues 777–791 (LTQNVTPPSSPVNII) the composition is skewed to polar residues. A compositionally biased stretch (low complexity) spans 792–812 (TSSSTTSSSTSSTTSSTTSST). A compositionally biased stretch (polar residues) spans 821–838 (TLPIKTSSPTKPESQKPS). The span at 854–878 (NNNNNNNNNNNNNNNNNNNNNNNNN) shows a compositional bias: low complexity. Residues 860–971 (NNNNNNNNNN…QESIQLNQTL (112 aa)) adopt a coiled-coil conformation. The 275-residue stretch at 987–1261 (RDENNIIGRG…IDTILNHPLF (275 aa)) folds into the Protein kinase domain. Residues 993–1001 (IGRGSNGTL) and Lys-1016 each bind ATP. Residue Asp-1130 is the Proton acceptor of the active site. A KEN domain is found at 1264-1431 (TNEKIKFYES…NSKDYLNIKF (168 aa)).

The protein belongs to the protein kinase superfamily. Ser/Thr protein kinase family.

The catalysed reaction is L-seryl-[protein] + ATP = O-phospho-L-seryl-[protein] + ADP + H(+). The enzyme catalyses L-threonyl-[protein] + ATP = O-phospho-L-threonyl-[protein] + ADP + H(+). The chain is Probable serine/threonine-protein kinase irlA (irlA) from Dictyostelium discoideum (Social amoeba).